Reading from the N-terminus, the 189-residue chain is Dual specificity phosphatase 21 (189 aa).

The Tyrosine-protein phosphatase domain occupies 20–161 (GLSQITASLF…LIHYEFKLFS (142 aa)). A sufficient for mitochondrial localization region spans residues 43-128 (SNNHITTIIN…YLMKYHNMTL (86 aa)). Catalysis depends on Cys-105, which acts as the Phosphocysteine intermediate.

Belongs to the protein-tyrosine phosphatase family. Non-receptor class dual specificity subfamily. Microtubule inner protein component of sperm flagellar doublet microtubules. Selectively expressed in testis.

Its subcellular location is the cytoplasm. It is found in the nucleus. The protein resides in the mitochondrion inner membrane. The protein localises to the cytoskeleton. It localises to the flagellum axoneme. It catalyses the reaction O-phospho-L-tyrosyl-[protein] + H2O = L-tyrosyl-[protein] + phosphate. The enzyme catalyses O-phospho-L-seryl-[protein] + H2O = L-seryl-[protein] + phosphate. It carries out the reaction O-phospho-L-threonyl-[protein] + H2O = L-threonyl-[protein] + phosphate. Its function is as follows. Protein phosphatase component of the sperm flagellar doublet microtubules. May act as a regulator of sperm motility by mediating dephosphorylation of sperm doublet microtubule proteins. Can dephosphorylate single and diphosphorylated synthetic MAPK peptides, with preference for the phosphotyrosine and diphosphorylated forms over phosphothreonine. This Mus musculus (Mouse) protein is Dual specificity phosphatase 21.